Here is a 513-residue protein sequence, read N- to C-terminus: ATP synthase subunit alpha (513 aa).

Gly169–Thr176 provides a ligand contact to ATP.

This sequence belongs to the ATPase alpha/beta chains family. As to quaternary structure, F-type ATPases have 2 components, CF(1) - the catalytic core - and CF(0) - the membrane proton channel. CF(1) has five subunits: alpha(3), beta(3), gamma(1), delta(1), epsilon(1). CF(0) has three main subunits: a(1), b(2) and c(9-12). The alpha and beta chains form an alternating ring which encloses part of the gamma chain. CF(1) is attached to CF(0) by a central stalk formed by the gamma and epsilon chains, while a peripheral stalk is formed by the delta and b chains.

It localises to the cell inner membrane. It catalyses the reaction ATP + H2O + 4 H(+)(in) = ADP + phosphate + 5 H(+)(out). Produces ATP from ADP in the presence of a proton gradient across the membrane. The alpha chain is a regulatory subunit. In Francisella tularensis subsp. tularensis (strain WY96-3418), this protein is ATP synthase subunit alpha.